Reading from the N-terminus, the 405-residue chain is Sarcosine oxidase subunit beta (405 aa).

The FAD site is built by Gly31, His32, Glu53, Asn61, Met62, Thr66, and Ile68. His173 is modified (tele-8alpha-FMN histidine). FAD contacts are provided by Val197, Gly354, Gly357, and Lys359.

It belongs to the SoxB family. In terms of assembly, heterotetramer composed of subunits alpha (SoxA), beta (SoxB), gamma (SoxG) and delta (SoxD). The cofactor is FAD. FMN serves as cofactor.

The protein localises to the cytoplasm. It catalyses the reaction sarcosine + (6S)-5,6,7,8-tetrahydrofolate + O2 = (6R)-5,10-methylene-5,6,7,8-tetrahydrofolate + glycine + H2O2. The enzyme catalyses sarcosine + O2 + H2O = formaldehyde + glycine + H2O2. Functionally, in the presence of tetrahydrofolate, catalyzes the oxidative demethylation of sarcosine to yield glycine, 5,10-methylenetetrahydrofolate and hydrogen peroxide. In the absence of tetrahydrofolate, catalyzes the oxidative demethylation of sarcosine to yield glycine, formaldehyde and hydrogen peroxide. The sequence is that of Sarcosine oxidase subunit beta (soxB) from Arthrobacter sp.